The sequence spans 299 residues: DNA-binding transcriptional activator HetR (299 aa).

Residue serine 152 is part of the active site.

Belongs to the peptidase S48 family. Homodimer; disulfide-linked.

Its function is as follows. Might be involved in temporal and/or spatial regulation of nitrogen fixation. Dimerization is required for DNA-binding. Has both a protease and a DNA-binding activity. The sequence is that of DNA-binding transcriptional activator HetR from Leptolyngbya boryana (Plectonema boryanum).